Reading from the N-terminus, the 219-residue chain is MASAGLQLLAFILALSGVSGVLTATLLPNWKVNVDVDSNIITAIVQLHGLWMDCTWYSTGMFSCALKHSILSLPIHVQAARATMVLACVLSALGICTSTVGMKCTRLGGDRETKSHASFAGGVCFMSAGISSLISTVWYTKEIIANFLDLTVPESNKHEPGGAIYIGFISAMLLFISGMIFCTSCIKRNPEARLDPPTQQPISNTQLENNSTHNLKDYV.

At 1 to 7 the chain is on the cytoplasmic side; the sequence is MASAGLQ. Residues 8 to 28 traverse the membrane as a helical segment; that stretch reads LLAFILALSGVSGVLTATLLP. Residues 29 to 81 are Extracellular-facing; it reads NWKVNVDVDSNIITAIVQLHGLWMDCTWYSTGMFSCALKHSILSLPIHVQAAR. Residues 82-102 form a helical membrane-spanning segment; the sequence is ATMVLACVLSALGICTSTVGM. The Cytoplasmic segment spans residues 103–118; that stretch reads KCTRLGGDRETKSHAS. A helical membrane pass occupies residues 119–139; the sequence is FAGGVCFMSAGISSLISTVWY. The Extracellular portion of the chain corresponds to 140–160; sequence TKEIIANFLDLTVPESNKHEP. Residues 161-181 traverse the membrane as a helical segment; it reads GGAIYIGFISAMLLFISGMIF. The Cytoplasmic segment spans residues 182-219; that stretch reads CTSCIKRNPEARLDPPTQQPISNTQLENNSTHNLKDYV. The tract at residues 193-219 is disordered; that stretch reads RLDPPTQQPISNTQLENNSTHNLKDYV. The span at 200–213 shows a compositional bias: polar residues; sequence QPISNTQLENNSTH.

The protein belongs to the claudin family.

The protein localises to the cell junction. The protein resides in the tight junction. It is found in the cell membrane. In terms of biological role, plays a major role in tight junction-specific obliteration of the intercellular space, through calcium-independent cell-adhesion activity. In Homo sapiens (Human), this protein is Claudin-20 (CLDN20).